Consider the following 530-residue polypeptide: Pentatricopeptide repeat-containing protein At5g56310 (530 aa).

PPR repeat units lie at residues 77–114 (NTYLHNTMIRALSLLDEPNAHSIAITVYRKLWALCAKP), 115–149 (DTFTFPFVLKIAVRVSDVWFGRQIHGQVVVFGFDS), 150–180 (SVHVVTGLIQMYFSCGGLGDARKMFDEMLVK), 181–211 (DVNVWNALLAGYGKVGEMDEARSLLEMMPCW), 214–248 (NEVSWTCVISGYAKSGRASEAIEVFQRMLMENVEP), 249–283 (DEVTLLAVLSACADLGSLELGERICSYVDHRGMNR), 284–314 (AVSLNNAVIDMYAKSGNITKALDVFECVNER), 315–349 (NVVTWTTIIAGLATHGHGAEALAMFNRMVKAGVRP), 350–380 (NDVTFIAILSACSHVGWVDLGKRLFNSMRSK), and 386–420 (NIEHYGCMIDLLGRAGKLREADEVIKSMPFKANAA). The tract at residues 421–496 (IWGSLLAASN…MAGESSIEVE (76 aa)) is type E motif. Residues 497–527 (NRVYKFISGDLTHPQVERIHEILQEMDLQIQ) form a type E(+) motif region.

This sequence belongs to the PPR family. PCMP-E subfamily.

This Arabidopsis thaliana (Mouse-ear cress) protein is Pentatricopeptide repeat-containing protein At5g56310 (PCMP-E13).